The following is a 419-amino-acid chain: DNA polymerase IV (419 aa).

One can recognise a UmuC domain in the interval 12–193 (IFHIDMNCFY…MSVEEMYGIG (182 aa)). Asp-16 and Asp-112 together coordinate Mg(2+). The active site involves Glu-113. The tract at residues 388-419 (IITSQKNKNESQENQQPRTSFQKDFLDDYKKP) is disordered.

It belongs to the DNA polymerase type-Y family. In terms of assembly, monomer. Mg(2+) serves as cofactor.

The protein localises to the cytoplasm. It catalyses the reaction DNA(n) + a 2'-deoxyribonucleoside 5'-triphosphate = DNA(n+1) + diphosphate. Functionally, poorly processive, error-prone DNA polymerase involved in untargeted mutagenesis. Copies undamaged DNA at stalled replication forks, which arise in vivo from mismatched or misaligned primer ends. These misaligned primers can be extended by PolIV. Exhibits no 3'-5' exonuclease (proofreading) activity. May be involved in translesional synthesis, in conjunction with the beta clamp from PolIII. This Oceanobacillus iheyensis (strain DSM 14371 / CIP 107618 / JCM 11309 / KCTC 3954 / HTE831) protein is DNA polymerase IV.